The primary structure comprises 204 residues: MRVLRVDASARVDDSVTRRLADLMLEILGERVPDLSVVRREAAGMPFVDDAWVGANSTDPEARDSAQRWALAKSDELVSEVMAADVLVIATPIYNFGVPASLKAWVDQVARARLTFRDTEYGPEGLLTGKKAYVLVASGGTEVGSDIDFATPWLEFVLGFLGITDVEVIAADRGMLRGDSARQNAAEHVADVLERDWPALAEAS.

Residue Ser-9 coordinates FMN.

The protein belongs to the azoreductase type 1 family. As to quaternary structure, homodimer. FMN serves as cofactor.

It carries out the reaction 2 a quinone + NADH + H(+) = 2 a 1,4-benzosemiquinone + NAD(+). The enzyme catalyses N,N-dimethyl-1,4-phenylenediamine + anthranilate + 2 NAD(+) = 2-(4-dimethylaminophenyl)diazenylbenzoate + 2 NADH + 2 H(+). In terms of biological role, quinone reductase that provides resistance to thiol-specific stress caused by electrophilic quinones. Its function is as follows. Also exhibits azoreductase activity. Catalyzes the reductive cleavage of the azo bond in aromatic azo compounds to the corresponding amines. This chain is FMN-dependent NADH:quinone oxidoreductase, found in Thiobacillus denitrificans (strain ATCC 25259 / T1).